The sequence spans 30 residues: MERQNVQQQRGKDQRPQRPGASNPRRPNQR.

Residues 1-30 (MERQNVQQQRGKDQRPQRPGASNPRRPNQR) are disordered.

In terms of biological role, might be involved in DNA-binding; the protein binds DNA in gel-shift assays and immunogold electron microscopy shows labelling of condensed chromatin. The protein is Protein ScvA (scvA) of Coxiella burnetii (strain RSA 493 / Nine Mile phase I).